Reading from the N-terminus, the 530-residue chain is MTSIYHDFIHNKLQSFGRIGRYFVNFVVLAHRFIALHIHPFWIQLSYFLLISILGSVLLMFLKPSNPEFRPGYIDMLFLSTSALTLSSLITIEMEVLSSSQIVVITLLMLLGGEVFVSFLGLMLRLNHKHNPEFSGDKVSSVPIELDTINSASTVISCEELQLEAAIPEVPSSTIKDLKRSKRLRWFLGFVVFSYFVVIHVAGFLLVLWYISRVSSAKAPLKKKGINIALFSFSVTVSSFANVGLVPTNENMAIFSKNPGLLLLFIGQILAGNTLYPLFLRLLIWFLGKVTKLRELKLMIKNPEELQYDYLLPKLPTAFLASTVIGLMASLVTLFGAVDWNSSVFDGLSSYQKIINALFMAVNARHSGENSIDCSLIAPAVLVLFIILMYLPPSTTFALSNGDEKTANKKAKRKLGLVVQNLAFSQLACISVFVIVAFITERSRLRNDPLNFSALNMIFEIISAYGNVGLSTGYSCSRLQKLHPGSICQDKPYSLSGWWSDEGKLLLVFVMLYGRLKAFTKGTGEYWRLW.

Residues 1 to 40 (MTSIYHDFIHNKLQSFGRIGRYFVNFVVLAHRFIALHIHP) are Cytoplasmic-facing. The next 2 membrane-spanning stretches (helical) occupy residues 41–61 (FWIQ…LLMF) and 102–122 (IVVI…FLGL). Residues 123 to 186 (MLRLNHKHNP…DLKRSKRLRW (64 aa)) are Cytoplasmic-facing. 2 consecutive transmembrane segments (helical) span residues 187 to 207 (FLGF…FLLV) and 260 to 280 (GLLL…PLFL). The Cytoplasmic segment spans residues 281–317 (RLLIWFLGKVTKLRELKLMIKNPEELQYDYLLPKLPT). 2 helical membrane-spanning segments follow: residues 318–338 (AFLA…FGAV) and 372–392 (IDCS…MYLP). Over 393-418 (PSTTFALSNGDEKTANKKAKRKLGLV) the chain is Cytoplasmic. Helical transmembrane passes span 419 to 439 (VQNL…VAFI) and 494 to 514 (SLSG…MLYG). The Cytoplasmic portion of the chain corresponds to 515–530 (RLKAFTKGTGEYWRLW).

The protein belongs to the TrkH potassium transport family. HKT (TC 2.A.38.3) subfamily. Expressed in epidermis and vascular tissue of endodermis in roots, and in cells surrounding the vasculature in leaves.

It localises to the membrane. The catalysed reaction is Na(+)(in) = Na(+)(out). In terms of biological role, seems to be involved in regulation of potassium-sodium homeostasis. Seems to act as a high-affinity sodium transporter, which mediates increased sodium uptake in roots under potassium deficiency and contributes to sodium accumulation and salt toxicity. Involved in nutritional sodium uptake and distribution in potassium-starved roots to allow plant growth. May also act as a potassium transporter. Functions as a sodium-potassium cotransporter. The chain is Cation transporter HKT2;1 from Oryza sativa subsp. indica (Rice).